Here is a 1031-residue protein sequence, read N- to C-terminus: GTPase activating protein Gyp51 (1031 aa).

Residues 1–32 show a composition bias toward basic and acidic residues; that stretch reads MAFTEANEREVQSSYEKENVKIIREEEAKDQE. Disordered stretches follow at residues 1–229, 278–317, 339–371, 420–459, and 490–520; these read MAFT…TNVN, FIEQ…SQND, DHLP…DHKA, NDEL…PSHV, and KKNT…STSP. Positions 43–59 are enriched in polar residues; sequence TGTSPDLNFFSTQNVMQ. Positions 62 to 78 are enriched in acidic residues; it reads FEDEYSEFSNEDDEAEI. Residues 105-117 are compositionally biased toward polar residues; sequence SQQSVEEQNNTTN. Residues 195–217 show a composition bias toward basic and acidic residues; the sequence is EDLKDEVKSVHEFNEPNDLRQQE. Positions 219 to 229 are enriched in acidic residues; the sequence is SYSDDDDTNVN. Over residues 278 to 306 the composition is skewed to polar residues; the sequence is FIEQNGPNSDTVSGFKETSSIVNSSSTTE. Polar residues-rich tracts occupy residues 420 to 429, 436 to 455, and 493 to 505; these read NDELSASGSQ, GTNS…NSEP, and TAFS…STNH. The 197-residue stretch at 610–806 folds into the Rab-GAP TBC domain; it reads HNSHTVHTVV…HLYDILFLYG (197 aa). The chain crosses the membrane as a helical span at residues 798 to 818; that stretch reads LYDILFLYGPGILFNFGLALL.

It belongs to the GYP5 family.

It localises to the membrane. Its subcellular location is the cytoplasm. Its function is as follows. GTPase-activating protein involved in ER to Golgi trafficking and polarized exocytosis. The protein is GTPase activating protein Gyp51 (gyp51) of Schizosaccharomyces pombe (strain 972 / ATCC 24843) (Fission yeast).